The sequence spans 243 residues: 3-deoxy-manno-octulosonate cytidylyltransferase (243 aa).

It belongs to the KdsB family.

It is found in the cytoplasm. The enzyme catalyses 3-deoxy-alpha-D-manno-oct-2-ulosonate + CTP = CMP-3-deoxy-beta-D-manno-octulosonate + diphosphate. Its pathway is nucleotide-sugar biosynthesis; CMP-3-deoxy-D-manno-octulosonate biosynthesis; CMP-3-deoxy-D-manno-octulosonate from 3-deoxy-D-manno-octulosonate and CTP: step 1/1. It functions in the pathway bacterial outer membrane biogenesis; lipopolysaccharide biosynthesis. Activates KDO (a required 8-carbon sugar) for incorporation into bacterial lipopolysaccharide in Gram-negative bacteria. The protein is 3-deoxy-manno-octulosonate cytidylyltransferase of Bartonella tribocorum (strain CIP 105476 / IBS 506).